The sequence spans 170 residues: uncharacterized protein (170 aa).

The Ferritin-like diiron domain occupies 1-148; that stretch reads MVKSQKVIDV…TIHDFFENAT (148 aa).

This is an uncharacterized protein from Ureaplasma parvum serovar 3 (strain ATCC 700970).